Reading from the N-terminus, the 478-residue chain is UDP-N-acetylmuramate--L-alanine ligase (478 aa).

Residue 120-126 (GSHGKTT) participates in ATP binding.

This sequence belongs to the MurCDEF family.

The protein localises to the cytoplasm. It carries out the reaction UDP-N-acetyl-alpha-D-muramate + L-alanine + ATP = UDP-N-acetyl-alpha-D-muramoyl-L-alanine + ADP + phosphate + H(+). The protein operates within cell wall biogenesis; peptidoglycan biosynthesis. Functionally, cell wall formation. The polypeptide is UDP-N-acetylmuramate--L-alanine ligase (Rickettsia bellii (strain OSU 85-389)).